Here is a 147-residue protein sequence, read N- to C-terminus: MISSAATFRQHQEILVIATQGKSLHNFNSKIQAVVQHSGVKTGLCTVFVRHTSASLIIQENADPDVLTDLAIFFAQLVPEDGRRYRHSTEGLDDMPAHIRSALTKTSEHIPIVNGRLGLGTWQGVFLWEHRQRPHQREVIVHVSGEV.

The protein belongs to the UPF0047 family.

The chain is UPF0047 protein sll1880 from Synechocystis sp. (strain ATCC 27184 / PCC 6803 / Kazusa).